Reading from the N-terminus, the 149-residue chain is Large ribosomal subunit protein uL22c (149 aa).

This sequence belongs to the universal ribosomal protein uL22 family. In terms of assembly, part of the 50S ribosomal subunit.

It is found in the plastid. The protein resides in the chloroplast. This protein binds specifically to 23S rRNA. In terms of biological role, the globular domain of the protein is located near the polypeptide exit tunnel on the outside of the subunit, while an extended beta-hairpin is found that lines the wall of the exit tunnel in the center of the 70S ribosome. The sequence is that of Large ribosomal subunit protein uL22c (rpl22) from Brachypodium distachyon (Purple false brome).